Reading from the N-terminus, the 241-residue chain is Thiamine import ATP-binding protein ThiQ (241 aa).

The 229-residue stretch at 7 to 235 (IRLSDVRFSY…AGPEALRHYI (229 aa)) folds into the ABC transporter domain. 37-44 (GPSGSGKS) contacts ATP.

Belongs to the ABC transporter superfamily. Thiamine importer (TC 3.A.1.19.1) family. In terms of assembly, the complex is composed of two ATP-binding proteins (ThiQ), two transmembrane proteins (ThiP) and a solute-binding protein (ThiB).

The protein resides in the cell inner membrane. The enzyme catalyses thiamine(out) + ATP + H2O = thiamine(in) + ADP + phosphate + H(+). Functionally, part of the ABC transporter complex ThiBPQ involved in thiamine import. Responsible for energy coupling to the transport system. The protein is Thiamine import ATP-binding protein ThiQ of Brucella melitensis biotype 1 (strain ATCC 23456 / CCUG 17765 / NCTC 10094 / 16M).